Consider the following 310-residue polypeptide: Pantothenate kinase (310 aa).

Residue 95-102 coordinates ATP; that stretch reads GSVAVGKS.

This sequence belongs to the prokaryotic pantothenate kinase family.

Its subcellular location is the cytoplasm. It carries out the reaction (R)-pantothenate + ATP = (R)-4'-phosphopantothenate + ADP + H(+). The protein operates within cofactor biosynthesis; coenzyme A biosynthesis; CoA from (R)-pantothenate: step 1/5. This is Pantothenate kinase from Rhodococcus opacus (strain B4).